The primary structure comprises 100 residues: Small ribosomal subunit protein uS14 (100 aa).

Residues Cys-63, Cys-66, Cys-79, and Cys-82 each contribute to the Zn(2+) site.

The protein belongs to the universal ribosomal protein uS14 family. As to quaternary structure, part of the 30S ribosomal subunit. Contacts proteins S3 and S10. Zn(2+) is required as a cofactor.

Functionally, binds 16S rRNA, required for the assembly of 30S particles and may also be responsible for determining the conformation of the 16S rRNA at the A site. The chain is Small ribosomal subunit protein uS14 (rpsN) from Legionella pneumophila (strain Paris).